The primary structure comprises 364 residues: Caveolae-associated protein 4 (364 aa).

The interval Met1–Asp24 is disordered. A coiled-coil region spans residues Val44–Gln77. Residues Ser172 and Ser173 each carry the phosphoserine modification. A coiled-coil region spans residues Phe202 to Val226. Residues Arg231–Lys256 are compositionally biased toward basic and acidic residues. 2 disordered regions span residues Arg231 to Ala283 and Ser311 to Pro339. A Phosphotyrosine modification is found at Tyr326. Thr336 carries the phosphothreonine modification. Ser355 is subject to Phosphoserine.

It belongs to the CAVIN family. As to quaternary structure, component of the CAVIN complex composed of CAVIN1, CAVIN2, CAVIN3 and CAVIN4. Interacts with CAVIN1, ADRA1A and ADRA1B. Interacts with CAVIN2; this augments the transactivation of NPPA. Interacts with CAV3. Interacts with MAPK1 and MAPK3.

The protein resides in the cytoplasm. The protein localises to the myofibril. It is found in the sarcomere. It localises to the cytosol. Its subcellular location is the cell membrane. The protein resides in the sarcolemma. The protein localises to the membrane. It is found in the caveola. Modulates the morphology of formed caveolae in cardiomyocytes, but is not required for caveolar formation. Facilitates the recruitment of MAPK1/3 to caveolae within cardiomyocytes and regulates alpha-1 adrenergic receptor-induced hypertrophic responses in cardiomyocytes through MAPK1/3 activation. Contributes to proper membrane localization and stabilization of caveolin-3 (CAV3) in cardiomyocytes. Induces RHOA activation and activates NPPA transcription and myofibrillar organization through the Rho/ROCK signaling pathway. This Homo sapiens (Human) protein is Caveolae-associated protein 4.